We begin with the raw amino-acid sequence, 369 residues long: Protein FAM187B (369 aa).

The signal sequence occupies residues 1–17 (MPPMLWLLLHFAAPALG). Residues 18 to 335 (FYFSISCPSG…RADSVLKGLK (318 aa)) lie on the Extracellular side of the membrane. N-linked (GlcNAc...) asparagine glycans are attached at residues Asn45, Asn68, and Asn130. The helical transmembrane segment at 336-356 (LVLLVVTVLALLGALLKCIHP) threads the bilayer. The Cytoplasmic portion of the chain corresponds to 357–369 (SPGRRSTQVLVVK).

Belongs to the FAM187 family.

Its subcellular location is the membrane. This Homo sapiens (Human) protein is Protein FAM187B (FAM187B).